The primary structure comprises 186 residues: MDQTQNTIAGIGEINGSIKTEINAIATVDDSNEKLNQIINSNQKILELLHQLKLTVSSFTPASQLHLLQRLNSLVMELDNMAKLSDKCNIQVPIEVLNLIDDGKNPDEFTKDVLNKNCIAKNQVTKGKSDAFKGLRKHLLEELEQAFPDEVDRYRDIRASYAAEAKRLAQTQSVLPNGDAKVKSEL.

Belongs to the Mediator complex subunit 10 family. Mono-, di- and oligomers. Component of the Mediator complex. Interacts with GEBPL.

The protein localises to the nucleus. Component of the Mediator complex, a coactivator involved in the regulated transcription of nearly all RNA polymerase II-dependent genes. Mediator functions as a bridge to convey information from gene-specific regulatory proteins to the basal RNA polymerase II transcription machinery. The Mediator complex, having a compact conformation in its free form, is recruited to promoters by direct interactions with regulatory proteins and serves for the assembly of a functional pre-initiation complex with RNA polymerase II and the general transcription factors. This Arabidopsis thaliana (Mouse-ear cress) protein is Mediator of RNA polymerase II transcription subunit 10a.